We begin with the raw amino-acid sequence, 348 residues long: Protein pelota homolog (348 aa).

It belongs to the eukaryotic release factor 1 family. Pelota subfamily. As to quaternary structure, monomer. Requires a divalent metal cation as cofactor.

It localises to the cytoplasm. Functionally, may function in recognizing stalled ribosomes, interact with stem-loop structures in stalled mRNA molecules, and effect endonucleolytic cleavage of the mRNA. May play a role in the release non-functional ribosomes and degradation of damaged mRNAs. Has endoribonuclease activity. In Methanococcus maripaludis (strain C5 / ATCC BAA-1333), this protein is Protein pelota homolog.